A 32-amino-acid chain; its full sequence is Photosystem I reaction center subunit XII (32 aa).

Residues 3 to 23 (SISDGQIVVALISAFIIVILA) form a helical membrane-spanning segment.

Belongs to the PsaM family.

The protein resides in the plastid. The protein localises to the chloroplast thylakoid membrane. The chain is Photosystem I reaction center subunit XII from Anthoceros angustus (Hornwort).